A 221-amino-acid polypeptide reads, in one-letter code: Protein-L-isoaspartate O-methyltransferase (221 aa).

Residue serine 60 is part of the active site.

The protein belongs to the methyltransferase superfamily. L-isoaspartyl/D-aspartyl protein methyltransferase family.

Its subcellular location is the cytoplasm. It catalyses the reaction [protein]-L-isoaspartate + S-adenosyl-L-methionine = [protein]-L-isoaspartate alpha-methyl ester + S-adenosyl-L-homocysteine. Its function is as follows. Catalyzes the methyl esterification of L-isoaspartyl residues in peptides and proteins that result from spontaneous decomposition of normal L-aspartyl and L-asparaginyl residues. It plays a role in the repair and/or degradation of damaged proteins. This is Protein-L-isoaspartate O-methyltransferase from Rhodospirillum centenum (strain ATCC 51521 / SW).